The primary structure comprises 487 residues: Protein DETOXIFICATION 10 (487 aa).

12 helical membrane passes run 35-55 (LICFAAPMAAVVIIQFMIQII), 73-93 (FAVSFCNVTGFSFIIGLSCAL), 122-142 (LVCLPLSLLWFNMGKLIVILG), 155-175 (AAWLIPGLFAYAVLQPLIRYF), 184-204 (LLVTSSVVFCIHVPLCWLLVY), 211-231 (IGGALALSLSYWLYAIFLGSF), 264-284 (AAMLCLEWWSYELIILLSGLL), 293-313 (VLSICFETLSITYSIPLAIAA), 333-353 (IVVYAAMSLAVMDALMVSMSL), 377-397 (MAPLVSISIILDSLQGVLSGV), 412-432 (FGAFYLWGIPIAASLAFWVHL), and 435-455 (VGLWIGILAGAVLQTLLLALV).

It belongs to the multi antimicrobial extrusion (MATE) (TC 2.A.66.1) family.

The protein localises to the membrane. This Arabidopsis thaliana (Mouse-ear cress) protein is Protein DETOXIFICATION 10.